A 217-amino-acid chain; its full sequence is Ribosomal RNA small subunit methyltransferase G (217 aa).

S-adenosyl-L-methionine contacts are provided by residues Gly-78, Phe-83, 129-130 (GE), and Arg-146.

The protein belongs to the methyltransferase superfamily. RNA methyltransferase RsmG family.

The protein resides in the cytoplasm. It carries out the reaction guanosine(527) in 16S rRNA + S-adenosyl-L-methionine = N(7)-methylguanosine(527) in 16S rRNA + S-adenosyl-L-homocysteine. Functionally, specifically methylates the N7 position of guanine in position 527 of 16S rRNA. The protein is Ribosomal RNA small subunit methyltransferase G of Geobacter sulfurreducens (strain ATCC 51573 / DSM 12127 / PCA).